Consider the following 433-residue polypeptide: Glutamate--tRNA ligase (433 aa).

The 'HIGH' region motif lies at 10-20; it reads PSPTGYLHIGG. Residues 211 to 215 carry the 'KMSKS' region motif; sequence KMSKR. ATP is bound at residue K214.

The protein belongs to the class-I aminoacyl-tRNA synthetase family. Glutamate--tRNA ligase type 1 subfamily. As to quaternary structure, monomer.

The protein localises to the cytoplasm. It catalyses the reaction tRNA(Glu) + L-glutamate + ATP = L-glutamyl-tRNA(Glu) + AMP + diphosphate. In terms of biological role, catalyzes the attachment of glutamate to tRNA(Glu) in a two-step reaction: glutamate is first activated by ATP to form Glu-AMP and then transferred to the acceptor end of tRNA(Glu). This chain is Glutamate--tRNA ligase, found in Akkermansia muciniphila (strain ATCC BAA-835 / DSM 22959 / JCM 33894 / BCRC 81048 / CCUG 64013 / CIP 107961 / Muc).